We begin with the raw amino-acid sequence, 456 residues long: 3-isopropylmalate dehydratase large subunit (456 aa).

Residues C336, C396, and C399 each coordinate [4Fe-4S] cluster.

It belongs to the aconitase/IPM isomerase family. LeuC type 1 subfamily. Heterodimer of LeuC and LeuD. The cofactor is [4Fe-4S] cluster.

It carries out the reaction (2R,3S)-3-isopropylmalate = (2S)-2-isopropylmalate. It functions in the pathway amino-acid biosynthesis; L-leucine biosynthesis; L-leucine from 3-methyl-2-oxobutanoate: step 2/4. Its function is as follows. Catalyzes the isomerization between 2-isopropylmalate and 3-isopropylmalate, via the formation of 2-isopropylmaleate. This chain is 3-isopropylmalate dehydratase large subunit, found in Staphylococcus epidermidis (strain ATCC 35984 / DSM 28319 / BCRC 17069 / CCUG 31568 / BM 3577 / RP62A).